Consider the following 210-residue polypeptide: MTRVLYIEGSPNKDYSASIEVCNAFLDTYRHAHPDHEIQKLDIWNLAIPEFDEAALAAKYAGLSGKALTPSQATAWQRIEQLAAPFHEADKFLFGVPLWNFSIPYKLKHLIDAISQKDVLFTFDGAGFAGKLAGKKAAVIYARGLGYQSPGSFTPAAEFDLQRPYMETWLRFVGVQDVTGIVVERTLFGANGTVDRSRAIDEARTIARTF.

FMN is bound by residues S10 and 16-18; that span reads SAS.

It belongs to the azoreductase type 1 family. Homodimer. It depends on FMN as a cofactor.

It carries out the reaction 2 a quinone + NADH + H(+) = 2 a 1,4-benzosemiquinone + NAD(+). It catalyses the reaction N,N-dimethyl-1,4-phenylenediamine + anthranilate + 2 NAD(+) = 2-(4-dimethylaminophenyl)diazenylbenzoate + 2 NADH + 2 H(+). Quinone reductase that provides resistance to thiol-specific stress caused by electrophilic quinones. Functionally, also exhibits azoreductase activity. Catalyzes the reductive cleavage of the azo bond in aromatic azo compounds to the corresponding amines. The protein is FMN-dependent NADH:quinone oxidoreductase 9 of Burkholderia lata (strain ATCC 17760 / DSM 23089 / LMG 22485 / NCIMB 9086 / R18194 / 383).